A 91-amino-acid chain; its full sequence is Putative protein p22 (91 aa).

This is Putative protein p22 (22) from Escherichia coli (Bacteriophage APSE-1).